We begin with the raw amino-acid sequence, 71 residues long: DNA-directed RNA polymerase subunit Rpo10 (71 aa).

Residues Cys6, Cys9, Cys52, and Cys53 each coordinate Zn(2+).

The protein belongs to the archaeal Rpo10/eukaryotic RPB10 RNA polymerase subunit family. As to quaternary structure, part of the RNA polymerase complex. The cofactor is Zn(2+).

Its subcellular location is the cytoplasm. It catalyses the reaction RNA(n) + a ribonucleoside 5'-triphosphate = RNA(n+1) + diphosphate. In terms of biological role, DNA-dependent RNA polymerase (RNAP) catalyzes the transcription of DNA into RNA using the four ribonucleoside triphosphates as substrates. The chain is DNA-directed RNA polymerase subunit Rpo10 from Methanocella arvoryzae (strain DSM 22066 / NBRC 105507 / MRE50).